Consider the following 432-residue polypeptide: UDP-N-acetylmuramate--L-alanine ligase (432 aa).

An ATP-binding site is contributed by G109–T115.

Belongs to the MurCDEF family.

The protein localises to the cytoplasm. The enzyme catalyses UDP-N-acetyl-alpha-D-muramate + L-alanine + ATP = UDP-N-acetyl-alpha-D-muramoyl-L-alanine + ADP + phosphate + H(+). Its pathway is cell wall biogenesis; peptidoglycan biosynthesis. Functionally, cell wall formation. The sequence is that of UDP-N-acetylmuramate--L-alanine ligase from Campylobacter jejuni subsp. jejuni serotype O:2 (strain ATCC 700819 / NCTC 11168).